A 91-amino-acid chain; its full sequence is DNA/RNA-binding protein Alba (91 aa).

Lys11 is modified (N6-acetyllysine).

Belongs to the histone-like Alba family. In terms of processing, acetylated. Acetylation at Lys-11 decreases DNA-binding affinity.

Its subcellular location is the cytoplasm. The protein localises to the chromosome. In terms of biological role, binds double-stranded DNA tightly but without sequence specificity. Incubation with DNA in vitro gives fibrous structures 10.3 +/- 1.1 nm in thickness (naked DNA is 1.83 +/- 0.37 nm). This protein does not significantly compact DNA. The protein is DNA/RNA-binding protein Alba of Thermococcus kodakarensis (strain ATCC BAA-918 / JCM 12380 / KOD1) (Pyrococcus kodakaraensis (strain KOD1)).